Reading from the N-terminus, the 235-residue chain is tRNA (guanine-N(1)-)-methyltransferase (235 aa).

Residues glycine 114 and 134 to 139 each bind S-adenosyl-L-methionine; that span reads VGDYIL.

Belongs to the RNA methyltransferase TrmD family. As to quaternary structure, homodimer.

The protein localises to the cytoplasm. It carries out the reaction guanosine(37) in tRNA + S-adenosyl-L-methionine = N(1)-methylguanosine(37) in tRNA + S-adenosyl-L-homocysteine + H(+). Specifically methylates guanosine-37 in various tRNAs. The protein is tRNA (guanine-N(1)-)-methyltransferase of Chelativorans sp. (strain BNC1).